A 224-amino-acid chain; its full sequence is Cytochrome c oxidase subunit 2 (224 aa).

Over 1–26 (MSTWGQMNLMDPASPIQIEMMLFHDH) the chain is Mitochondrial intermembrane. A helical transmembrane segment spans residues 27–48 (AMAILIGIFTLVSCLGVKLCFN). Residues 49–62 (TLSTRTMHEAQLLE) lie on the Mitochondrial matrix side of the membrane. Residues 63–82 (TLWTILPAFLLVWLALPSLR) traverse the membrane as a helical segment. Residues 83–224 (LLYLLDEQSS…DVKDFINMCN (142 aa)) are Mitochondrial intermembrane-facing. Cu cation is bound by residues His-161, Cys-196, Glu-198, Cys-200, His-204, and Met-207. Glu-198 contributes to the Mg(2+) binding site.

Belongs to the cytochrome c oxidase subunit 2 family. As to quaternary structure, component of the cytochrome c oxidase (complex IV, CIV), a multisubunit enzyme composed of a catalytic core of 3 subunits and several supernumerary subunits. The complex exists as a monomer or a dimer and forms supercomplexes (SCs) in the inner mitochondrial membrane with ubiquinol-cytochrome c oxidoreductase (cytochrome b-c1 complex, complex III, CIII). Cu cation is required as a cofactor.

It is found in the mitochondrion inner membrane. It catalyses the reaction 4 Fe(II)-[cytochrome c] + O2 + 8 H(+)(in) = 4 Fe(III)-[cytochrome c] + 2 H2O + 4 H(+)(out). Functionally, component of the cytochrome c oxidase, the last enzyme in the mitochondrial electron transport chain which drives oxidative phosphorylation. The respiratory chain contains 3 multisubunit complexes succinate dehydrogenase (complex II, CII), ubiquinol-cytochrome c oxidoreductase (cytochrome b-c1 complex, complex III, CIII) and cytochrome c oxidase (complex IV, CIV), that cooperate to transfer electrons derived from NADH and succinate to molecular oxygen, creating an electrochemical gradient over the inner membrane that drives transmembrane transport and the ATP synthase. Cytochrome c oxidase is the component of the respiratory chain that catalyzes the reduction of oxygen to water. Electrons originating from reduced cytochrome c in the intermembrane space (IMS) are transferred via the dinuclear copper A center (CU(A)) of subunit 2 and heme A of subunit 1 to the active site in subunit 1, a binuclear center (BNC) formed by heme A3 and copper B (CU(B)). The BNC reduces molecular oxygen to 2 water molecules using 4 electrons from cytochrome c in the IMS and 4 protons from the mitochondrial matrix. The protein is Cytochrome c oxidase subunit 2 (COII) of Albinaria turrita (Door snail).